The primary structure comprises 120 residues: MFLLYEYDIFWAFLVISSVIPILAFIISGVLAPLSEGPEKLSSYESGIEPIGDAWVQFRIRYYMFALVFVVFDVETVFLYPWAMSFDVLGVSVFIEALIFVLILIVGSVYAWRKGALEWS.

The next 3 membrane-spanning stretches (helical) occupy residues 9–29 (IFWAFLVISSVIPILAFIISG), 64–84 (MFALVFVVFDVETVFLYPWAM), and 88–108 (VLGVSVFIEALIFVLILIVGS).

The protein belongs to the complex I subunit 3 family. As to quaternary structure, NDH is composed of at least 16 different subunits, 5 of which are encoded in the nucleus.

It localises to the plastid. The protein localises to the chloroplast thylakoid membrane. The catalysed reaction is a plastoquinone + NADH + (n+1) H(+)(in) = a plastoquinol + NAD(+) + n H(+)(out). It carries out the reaction a plastoquinone + NADPH + (n+1) H(+)(in) = a plastoquinol + NADP(+) + n H(+)(out). Functionally, NDH shuttles electrons from NAD(P)H:plastoquinone, via FMN and iron-sulfur (Fe-S) centers, to quinones in the photosynthetic chain and possibly in a chloroplast respiratory chain. The immediate electron acceptor for the enzyme in this species is believed to be plastoquinone. Couples the redox reaction to proton translocation, and thus conserves the redox energy in a proton gradient. The sequence is that of NAD(P)H-quinone oxidoreductase subunit 3, chloroplastic from Lemna minor (Common duckweed).